A 63-amino-acid chain; its full sequence is uncharacterized protein (63 aa).

This is an uncharacterized protein from Saccharomyces cerevisiae (strain ATCC 204508 / S288c) (Baker's yeast).